Here is a 206-residue protein sequence, read N- to C-terminus: MKPQFITLDGIDGAGKSTNLAVIKAWFERRGLPVLFTREPGGTPVGEALREILLNPETKAGLRAETLMMFAARMQHIEDVILPALSDGIHVVSDRFTDATFAYQGGGRGMPSEDIEILEHWVQGGLRPDLTLLLDVPLEVSMARIGQTREKDRFEQEQADFFMRVRSVYLNRAAACPERYAVIDSNLGLDEVRNSIEKVLDGHFGC.

10–17 (GIDGAGKS) contributes to the ATP binding site.

This sequence belongs to the thymidylate kinase family.

It catalyses the reaction dTMP + ATP = dTDP + ADP. Phosphorylation of dTMP to form dTDP in both de novo and salvage pathways of dTTP synthesis. The sequence is that of Thymidylate kinase from Neisseria meningitidis serogroup C / serotype 2a (strain ATCC 700532 / DSM 15464 / FAM18).